Consider the following 287-residue polypeptide: MTAQLIDGKAIAANVREQVSRQVQARRQEGKRAPGLAVVLVGEDPASEVYVRNKHRACDKAGVHSVQHKLPADTTQADLEALIDSLNADCSIDGILVQLPLPDHLDARPILERIRPDKDVDGFHPYNLGRLAQRLPVLRPCTPKGIMTLLQESGIHARGLDAVIVGASNIVGRPMALELMLAGSTTTVCHRFTRDLESHVRRADLLVVAVGRPGLVKGEWVKEGAVVIDVGINRQDDGKLAGDVEFAPAAARASYITPVPGGVGPMTVASLLENTLFAAELHDGMHA.

NADP(+) is bound by residues 166 to 168 (GAS) and I232.

This sequence belongs to the tetrahydrofolate dehydrogenase/cyclohydrolase family. As to quaternary structure, homodimer.

It catalyses the reaction (6R)-5,10-methylene-5,6,7,8-tetrahydrofolate + NADP(+) = (6R)-5,10-methenyltetrahydrofolate + NADPH. The enzyme catalyses (6R)-5,10-methenyltetrahydrofolate + H2O = (6R)-10-formyltetrahydrofolate + H(+). It participates in one-carbon metabolism; tetrahydrofolate interconversion. Its function is as follows. Catalyzes the oxidation of 5,10-methylenetetrahydrofolate to 5,10-methenyltetrahydrofolate and then the hydrolysis of 5,10-methenyltetrahydrofolate to 10-formyltetrahydrofolate. The protein is Bifunctional protein FolD of Chromohalobacter salexigens (strain ATCC BAA-138 / DSM 3043 / CIP 106854 / NCIMB 13768 / 1H11).